Here is a 419-residue protein sequence, read N- to C-terminus: MGMTMTQKILASHAGLESVKAGQLIEVNLDLVLGNDITTPVAINEFKKFGVDKVFNKSQIAIVPDHFTPNKDIKAAEQVKYVREFSNKMGIENFFEVGEMGIEHCLLPEKGLVVAGDVVIGADSHTCTYGALGAFSTGIGSTDMAAGMATGQTWFKVPSAIKFILKNKPAKWVSGKDIILHIIGMIGVDGALYKSMEFVGDGLNYLSMDDRFTMANMAIEAGGKNGIFPVDDKTVEYLKEHTEKEWKIYEADEDAEYDEVIEIDLSTLKPTVSFPHLPDNTRTIDNANRVNIDQVVIGSCTNGRISDLRIARGILKGKKVKKGIRCIVIPGTQKIYLQALEEGIIKDLIEAGAVVSTPTCGPCLGGHMGILAKGERCVSTTNRNFVGRMGHVESEVYLASPAVAAASALTGKITDPELV.

The [4Fe-4S] cluster site is built by Cys300, Cys360, and Cys363.

Belongs to the aconitase/IPM isomerase family. LeuC type 2 subfamily. Heterodimer of LeuC and LeuD. Requires [4Fe-4S] cluster as cofactor.

The catalysed reaction is (2R,3S)-3-isopropylmalate = (2S)-2-isopropylmalate. It participates in amino-acid biosynthesis; L-leucine biosynthesis; L-leucine from 3-methyl-2-oxobutanoate: step 2/4. Functionally, catalyzes the isomerization between 2-isopropylmalate and 3-isopropylmalate, via the formation of 2-isopropylmaleate. The protein is 3-isopropylmalate dehydratase large subunit of Clostridium botulinum (strain Alaska E43 / Type E3).